Here is a 131-residue protein sequence, read N- to C-terminus: Small ribosomal subunit protein bS6 (131 aa).

At Lys93 the chain carries N6-acetyllysine. Residues 98-131 form a disordered region; the sequence is EASPMVKAKDERRERRDDFANETADDAEAGDSEE. The span at 104-116 shows a compositional bias: basic and acidic residues; it reads KAKDERRERRDDF. The segment covering 120-131 has biased composition (acidic residues); that stretch reads TADDAEAGDSEE.

It belongs to the bacterial ribosomal protein bS6 family.

Functionally, binds together with bS18 to 16S ribosomal RNA. The sequence is that of Small ribosomal subunit protein bS6 from Escherichia fergusonii (strain ATCC 35469 / DSM 13698 / CCUG 18766 / IAM 14443 / JCM 21226 / LMG 7866 / NBRC 102419 / NCTC 12128 / CDC 0568-73).